The primary structure comprises 488 residues: Inosine-5'-monophosphate dehydrogenase (488 aa).

CBS domains lie at 95-153 and 157-216; these read VISN…SIKI and MTQE…AKDE. Residues Asp-250 and 300–302 contribute to the NAD(+) site; that span reads GIG. 2 residues coordinate K(+): Gly-302 and Gly-304. Ser-305 is a binding site for IMP. Cys-307 contacts K(+). The active-site Thioimidate intermediate is Cys-307. Residues 340 to 342, 363 to 364, and 387 to 391 each bind IMP; these read DGG, GS, and YRGMG. The active-site Proton acceptor is Arg-403. Residue Glu-417 coordinates IMP. The interval 468–488 is disordered; sequence GLAESHPHNIQITKESPNYSF. Residues Glu-471, Ser-472, and His-473 each coordinate K(+). The span at 475-488 shows a compositional bias: polar residues; the sequence is HNIQITKESPNYSF.

This sequence belongs to the IMPDH/GMPR family. Homotetramer. Requires K(+) as cofactor.

It carries out the reaction IMP + NAD(+) + H2O = XMP + NADH + H(+). It functions in the pathway purine metabolism; XMP biosynthesis via de novo pathway; XMP from IMP: step 1/1. Mycophenolic acid (MPA) is a non-competitive inhibitor that prevents formation of the closed enzyme conformation by binding to the same site as the amobile flap. In contrast, mizoribine monophosphate (MZP) is a competitive inhibitor that induces the closed conformation. MPA is a potent inhibitor of mammalian IMPDHs but a poor inhibitor of the bacterial enzymes. MZP is a more potent inhibitor of bacterial IMPDH. In terms of biological role, catalyzes the conversion of inosine 5'-phosphate (IMP) to xanthosine 5'-phosphate (XMP), the first committed and rate-limiting step in the de novo synthesis of guanine nucleotides, and therefore plays an important role in the regulation of cell growth. The polypeptide is Inosine-5'-monophosphate dehydrogenase (Staphylococcus aureus (strain Mu50 / ATCC 700699)).